A 481-amino-acid chain; its full sequence is UDP-glycosyltransferase 73B3 (481 aa).

The active-site Proton acceptor is the His21. Position 21 (His21) interacts with an anthocyanidin. Asp132 serves as the catalytic Charge relay. Residues Ala355, Gln357, His372, Trp375, Asn376, Ser377, and Glu380 each coordinate UDP-alpha-D-glucose. An an anthocyanidin-binding site is contributed by Ala395. 2 residues coordinate UDP-alpha-D-glucose: Glu396 and Gln397.

This sequence belongs to the UDP-glycosyltransferase family. As to expression, expressed in roots and flowers.

It catalyses the reaction a flavonol + UDP-alpha-D-glucose = a flavonol 3-O-beta-D-glucoside + UDP + H(+). Possesses quercetin 3-O-glucosyltransferase activity in vitro. Also active in vitro on benzoates and benzoate derivatives. Involved in stress or defense responses. The chain is UDP-glycosyltransferase 73B3 (UGT73B3) from Arabidopsis thaliana (Mouse-ear cress).